The sequence spans 244 residues: 5-oxoprolinase subunit A (244 aa).

Belongs to the LamB/PxpA family. Forms a complex composed of PxpA, PxpB and PxpC.

It catalyses the reaction 5-oxo-L-proline + ATP + 2 H2O = L-glutamate + ADP + phosphate + H(+). In terms of biological role, catalyzes the cleavage of 5-oxoproline to form L-glutamate coupled to the hydrolysis of ATP to ADP and inorganic phosphate. This Escherichia fergusonii (strain ATCC 35469 / DSM 13698 / CCUG 18766 / IAM 14443 / JCM 21226 / LMG 7866 / NBRC 102419 / NCTC 12128 / CDC 0568-73) protein is 5-oxoprolinase subunit A.